The chain runs to 416 residues: Tumor necrosis factor receptor superfamily member 16 (416 aa).

Positions 1-19 (MAGFVPLLLLLLPAGPTWG) are cleaved as a signal peptide. TNFR-Cys repeat units follow at residues 23–57 (KCLT…TVCE), 58–99 (PCLD…DAVC), 100–138 (RCAY…DTVC), and 140–180 (ECPE…DAEC). 12 disulfides stabilise this stretch: cysteine 24-cysteine 35, cysteine 36-cysteine 49, cysteine 39-cysteine 56, cysteine 59-cysteine 75, cysteine 78-cysteine 91, cysteine 81-cysteine 99, cysteine 101-cysteine 114, cysteine 117-cysteine 130, cysteine 120-cysteine 138, cysteine 141-cysteine 156, cysteine 159-cysteine 172, and cysteine 162-cysteine 180. At 29-239 (YTTSGECCKA…PVVSRGTADN (211 aa)) the chain is on the extracellular side. Residue asparagine 52 is glycosylated (N-linked (GlcNAc...) asparagine). The helical transmembrane segment at 240–261 (LIPVYCSILAAVVVGLVAYIAF) threads the bilayer. Over 262–416 (KRWNSCKQNK…YSESTATSPV (155 aa)) the chain is Cytoplasmic. Composition is skewed to polar residues over residues 270 to 284 (NKQG…QTPS) and 294 to 315 (SGIS…STQG). The disordered stretch occupies residues 270 to 328 (NKQGANNRPVNQTPSPEGEKLHSDSGISVDSQSLHDQQPPNQSTQGPAPKGDGSLYASL). The Death domain occupies 333-410 (QEEVEKLLSS…DIAESLYSES (78 aa)).

As to quaternary structure, homodimer; disulfide-linked. Heterodimer with SORCS2. The extracellular domains of the heterodimer bind NGF. In terms of processing, N- and O-glycosylated. Phosphorylated on serine residues. As to expression, detected in embryonic dorsal root ganglion and retina.

Its subcellular location is the cell membrane. The protein resides in the perikaryon. The protein localises to the cell projection. It is found in the growth cone. It localises to the dendritic spine. In terms of biological role, low affinity receptor which can bind to NGF, BDNF, NTF3, and NTF4. Forms a heterodimeric receptor with SORCS2 that binds the precursor forms of NGF, BDNF and NTF3 with high affinity, and has much lower affinity for mature NGF and BDNF. Plays an important role in differentiation and survival of specific neuronal populations during development. Can mediate cell survival as well as cell death of neural cells. Plays a role in the inactivation of RHOA. Necessary for the circadian oscillation of clock genes in the suprachiasmatic nucleus (SCmgetaN) of the brain and in liver and of the genes involved in glucose and lipid metabolism in the liver. The polypeptide is Tumor necrosis factor receptor superfamily member 16 (NGFR) (Gallus gallus (Chicken)).